Consider the following 760-residue polypeptide: MSKRSKLLKRRMLSLSVICVLIGYGPVFNPVRSQAKVMTYSSENRELPENTKDGVMLHAFDWSFNNIKKELPSIAAAGYKAVQVSPVQGTKSNSTNSSDWWLLYQPTNQAIGNAQLGSYDDFKSLCSEAKNYGISIVVDVVMNHMANNGNDDEVASEVDPSFKDPSLYHHNGQCTDWNNRQDVTQEGIGMPDLNTQSSAVQSKAITFLNQCVDAGATGFRFDAAKHIETDLGLDANKSWSGNYWENVLGSLHNKSNLYIYGEVLQDGKVDNISAYESFMNVEASAYDGSLRGAIKSGDLTNAQGMGGLDSNKCVDMLETHDEYEHNESKDLTDWQRKAGWAIAASRAGSVPLFFDRPTGNIGSEGDALWKDSDVVAVNEFHNAMAGQNEYLRLQNNNKAMIIERGSKGAVIVNEGDSFNLNTPTNLEDGNYDNHGSATDSLTVSQGRMTGTVPANSIIVIYNKNSNPGSDRVTLSEQAAKAGDSVTITYDAGTTALKDASNVNLYWGYDGFSAATSKAMTSLGDNKWQTTITVPKEVTKNVNFSFTDGTSWDNNNGANWNIPLASNYLPHAGYKVDYDSSNLVSGNNFTIYYNGNLANSSNVSLHWGVNGWSNMQNLAMVKDSNGFWEATIAIPASSNTLNFCFTNGSSWDNNNNNNWTLNTWSSVPKVQVTPAPEACKQISVYYNGSLASSASNITLHWGCNGFTSPQDINMVKQADGRWLANITLPSGCYNVNMAFKDQSGTWDNNNSNNYNFSSTNN.

The signal sequence occupies residues 1 to 34 (MSKRSKLLKRRMLSLSVICVLIGYGPVFNPVRSQ). Ca(2+)-binding residues include Asn-143, Thr-184, and Asp-192. Asp-222 (nucleophile) is an active-site residue. His-226 lines the Ca(2+) pocket. Glu-262 (proton donor) is an active-site residue.

It belongs to the glycosyl hydrolase 13 family. Monomer. Ca(2+) serves as cofactor.

It catalyses the reaction Endohydrolysis of (1-&gt;4)-alpha-D-glucosidic linkages in polysaccharides containing three or more (1-&gt;4)-alpha-linked D-glucose units.. The chain is Alpha-amylase (amyA) from Clostridium acetobutylicum (strain ATCC 824 / DSM 792 / JCM 1419 / IAM 19013 / LMG 5710 / NBRC 13948 / NRRL B-527 / VKM B-1787 / 2291 / W).